The following is a 107-amino-acid chain: Putative double-stranded DNA mimic protein ETA_15890 (107 aa).

Belongs to the putative dsDNA mimic protein family.

Functionally, may act as a double-stranded DNA (dsDNA) mimic. Probably regulates the activity of a dsDNA-binding protein. The sequence is that of Putative double-stranded DNA mimic protein ETA_15890 from Erwinia tasmaniensis (strain DSM 17950 / CFBP 7177 / CIP 109463 / NCPPB 4357 / Et1/99).